A 1465-amino-acid chain; its full sequence is Neuropathy target esterase sws (1465 aa).

Residues 1–34 (MDVLEMLRASASGSYNTIFSEAWCQYVSKQITAT) are Lumenal-facing. Residues 35–55 (MYMYCALGMMGVLFLAWFMYF) traverse the membrane as a helical segment. Residues 56–1465 (KRMARLRLRD…RSSANNETKN (1410 aa)) are Cytoplasmic-facing. A nucleoside 3',5'-cyclic phosphate is bound at residue 174–301 (IFGHFEKPVF…IRVIQVIMIR (128 aa)). Polar residues-rich tracts occupy residues 331–349 (STMSGPINSQTSQSSRQTP) and 434–454 (QQSVGNLSTRRSSITQMTPDG). 2 disordered regions span residues 331 to 421 (STMS…TEVH) and 434 to 460 (QQSVGNLSTRRSSITQMTPDGSHSCPP). Phosphoserine is present on residues Ser446 and Ser455. A nucleoside 3',5'-cyclic phosphate-binding positions include 484–611 (ELGL…VVRR) and 600–727 (IVLD…LSHR). Residues 954–1120 (LVLGGGGARG…VNNLPGHLWR (167 aa)) enclose the PNPLA domain. Positions 958-963 (GGGARG) match the GXGXXG motif. The short motif at 985–989 (GVSIG) is the GXSXG element. Catalysis depends on Ser987, which acts as the Nucleophile. Asp1107 functions as the Proton acceptor in the catalytic mechanism. A DGA/G motif is present at residues 1107–1109 (DGG). Ser1201 bears the Phosphoserine mark. The segment at 1371-1465 (LERKTDKSTQ…RSSANNETKN (95 aa)) is disordered. The segment covering 1378–1390 (STQSSPPTSSRTS) has biased composition (low complexity). Residues 1392 to 1402 (RGKEEARHMDN) show a composition bias toward basic and acidic residues. Positions 1413 to 1424 (TGSGATEGIHTS) are enriched in polar residues. Basic and acidic residues predominate over residues 1447 to 1456 (VYKDEDKENR).

It belongs to the NTE family. Interacts with Pka-C3; interaction inhibits the catalytic function of Pka-C3 and the esterase activity of sws.

It localises to the endoplasmic reticulum membrane. The catalysed reaction is a 1-acyl-sn-glycero-3-phosphocholine + H2O = sn-glycerol 3-phosphocholine + a fatty acid + H(+). Functionally, phospholipase B that deacylates intracellular phosphatidylcholine (PtdCho), generating glycerophosphocholine (GroPtdCho). This deacylation occurs at both sn-2 and sn-1 positions of PtdCho. Its specific chemical modification by certain organophosphorus (OP) compounds leads to distal axonopathy. Plays a role in the signaling mechanism between neurons and glia that regulates glia wrapping during development of the adult brain. Essential for membrane lipid homeostasis and cell survival in both neurons and glia of the adult brain. This chain is Neuropathy target esterase sws, found in Drosophila erecta (Fruit fly).